Here is a 192-residue protein sequence, read N- to C-terminus: Thymidine kinase (192 aa).

ATP contacts are provided by residues 9 to 16 (SAMNAGKS) and 87 to 90 (DECQ). Glu-88 functions as the Proton acceptor in the catalytic mechanism. Zn(2+) contacts are provided by Cys-145, Cys-147, Cys-182, and His-185.

The protein belongs to the thymidine kinase family. Homotetramer.

The protein localises to the cytoplasm. The catalysed reaction is thymidine + ATP = dTMP + ADP + H(+). In Aliivibrio fischeri (strain ATCC 700601 / ES114) (Vibrio fischeri), this protein is Thymidine kinase.